A 395-amino-acid polypeptide reads, in one-letter code: GPI-anchor transamidase (395 aa).

Positions 1–27 (MAAPCFLTLRVATLAALALLSLGSSAA) are cleaved as a signal peptide. Topologically, residues 28-368 (GHIEDQAEQF…PKPRDWHPPG (341 aa)) are lumenal. Aspartate 79, isoleucine 82, glutamate 118, and aspartate 120 together coordinate Ca(2+). The active-site Proton donor is histidine 164. Cysteine 206 functions as the Nucleophile; acyl-thioester intermediate in the catalytic mechanism. Residues cysteine 206, serine 232, and serine 234 each coordinate a protein. Residues 231-236 (DSLSHQ) form an autoinhibitory loop region. The cysteines at positions 275 and 280 are disulfide-linked. The helical transmembrane segment at 369-385 (GFILGLWALIIMVFFKT) threads the bilayer. The Cytoplasmic segment spans residues 386–395 (YGIKHMKFIF).

This sequence belongs to the peptidase C13 family. In terms of assembly, heteropentamer. Part of the GPI-anchor transamidase complex, consisting of PIGK, PIGT, PIGS, PIGU and GAA1. Interacts with GPAA1. Interacts with PIGT; this interaction, via a disulfide link, stabilizes the expression of GAA1 and PIGK and links them to PIGS. The disulfide bond between PIGK/GPI8 and PIGT is important for normal enzyme activity.

It localises to the endoplasmic reticulum membrane. It functions in the pathway glycolipid biosynthesis; glycosylphosphatidylinositol-anchor biosynthesis. Its activity is regulated as follows. In the absence of proproteins substrates, exists in an inactive state with a disrupted catalytic site by an autoinhibitory loop. The binding of proprotein substrates, particularly the CSP region, to GPI-T triggers concerted conformational changes that alleviate the inhibition by the autoinhibitory loop. Meanwhile, proprotein residues near the omega- site induce the formation of a catalytic cleft for catalysis, following which the products are released and GPI-T reverts to the inactive state. Functionally, catalytic subunit of the glycosylphosphatidylinositol-anchor (GPI-anchor) transamidase (GPI-T) complex that catalyzes the formation of the linkage between a proprotein and a GPI-anchor and participates in GPI anchored protein biosynthesis. Recognizes diverse proproteins at a C-terminal signal peptide (CSP) region that lacks consensus sequence and replaces it with a GPI-anchor via a transamidation reaction. Transamidation catalysis reaction follows a two-phase mechanism. In the acyl-enzyme phase, the carbonyl group of the proproteins's omega-site undergoes a nucleophilic attack forming an enzyme-substrate thioester bond. Followed by a general acid catalysis that allows CSP releasing, regenerating the carbonyl, and forming the acyl-enzyme intermediate. In the GPI-anchor attachment phase, the amino group of the GPI-anchor's ethanolamine phosphate, the one on third mannose (EtNP3), mediates a nucleophilic attack on the carbonyl of the acyl-enzyme intermediate, replacing the CSP, allowing GPI-anchor attachment to the omega-residue, therefore forming the product and freeing the enzyme. This chain is GPI-anchor transamidase, found in Mus musculus (Mouse).